A 327-amino-acid polypeptide reads, in one-letter code: Cyclic AMP-responsive element-binding protein 1 (327 aa).

Disordered stretches follow at residues 1–26 (MTME…QQMT) and 94–113 (SEDS…RREI). Residues 87-146 (QISTIAESEDSQESVDSVTDSQKRREILSRRPSYRKILNDLSSDAPGVPRIEEEKSEEET) enclose the KID domain. A Phosphoserine; by CaMK1, CaMK2, CaMK4, PKB/AKT1 or PKB/AKT2, RPS6KA3, RPS6KA4, RPS6KA5, SGK1 and TSSK4 modification is found at Ser119. A Glycyl lysine isopeptide (Lys-Gly) (interchain with G-Cter in SUMO2) cross-link involves residue Lys122. Positions 125–148 (NDLSSDAPGVPRIEEEKSEEETSA) are disordered. Residue Ser128 is modified to Phosphoserine. Ser257 is subject to Phosphoserine; by HIPK2. One can recognise a bZIP domain in the interval 269–327 (ARKREVRLMKNREAARECRRKKKEYVKCLENRVAVLENQNKTLIEELKALKDLYCHKSD). The tract at residues 270-295 (RKREVRLMKNREAARECRRKKKEYVK) is basic motif. Glycyl lysine isopeptide (Lys-Gly) (interchain with G-Cter in SUMO1) cross-links involve residues Lys271 and Lys290. Residues 297–318 (LENRVAVLENQNKTLIEELKAL) form a leucine-zipper region.

The protein belongs to the bZIP family. In terms of assembly, interacts with PPRC1. Binds DNA as a dimer. This dimer is stabilized by magnesium ions. Interacts, through the bZIP domain, with the coactivators CRTC1/TORC1, CRTC2/TORC2 and CRTC3/TORC3. When phosphorylated on Ser-119, binds CREBBP. Interacts with CREBL2; regulates CREB1 phosphorylation, stability and transcriptional activity. Interacts (phosphorylated form) with TOX3. Interacts with ARRB1. Binds to HIPK2. Interacts with SGK1. Interacts with TSSK4; this interaction facilitates phosphorylation on Ser-119. Forms a complex with KMT2A and CREBBP. Interacts with TOX4; CREB1 is required for full induction of TOX4-dependent activity and the interaction is increased by cAMP and inhibited by insulin. As to quaternary structure, (Microbial infection) Interacts with hepatitis B virus/HBV protein X. (Microbial infection) Interacts with HTLV-1 protein Tax. In terms of processing, stimulated by phosphorylation. Phosphorylation of both Ser-119 and Ser-128 in the SCN regulates the activity of CREB and participates in circadian rhythm generation. Phosphorylation of Ser-119 allows CREBBP binding. In liver, phosphorylation is induced by fasting or glucagon in a circadian fashion. CREBL2 positively regulates phosphorylation at Ser-119 thereby stimulating CREB1 transcriptional activity. Phosphorylated upon calcium influx by CaMK4 and CaMK2 on Ser-119. CaMK4 is much more potent than CaMK2 in activating CREB. Phosphorylated by CaMK2 on Ser-128. Phosphorylation of Ser-128 blocks CREB-mediated transcription even when Ser-119 is phosphorylated. Phosphorylated by CaMK1. Phosphorylation of Ser-257 by HIPK2 in response to genotoxic stress promotes CREB1 activity, facilitating the recruitment of the coactivator CBP. Phosphorylated at Ser-119 by RPS6KA3, RPS6KA4 and RPS6KA5 in response to mitogenic or stress stimuli. Phosphorylated by TSSK4 on Ser-119. Sumoylated with SUMO1. Sumoylation on Lys-290, but not on Lys-271, is required for nuclear localization of this protein. Sumoylation is enhanced under hypoxia, promoting nuclear localization and stabilization.

The protein localises to the nucleus. In terms of biological role, phosphorylation-dependent transcription factor that stimulates transcription upon binding to the DNA cAMP response element (CRE), a sequence present in many viral and cellular promoters. Transcription activation is enhanced by the TORC coactivators which act independently of Ser-119 phosphorylation. Involved in different cellular processes including the synchronization of circadian rhythmicity and the differentiation of adipose cells. Regulates the expression of apoptotic and inflammatory response factors in cardiomyocytes in response to ERFE-mediated activation of AKT signaling. The chain is Cyclic AMP-responsive element-binding protein 1 (CREB1) from Homo sapiens (Human).